The primary structure comprises 507 residues: Histidine ammonia-lyase (507 aa).

Residues Ala141–Gly143 constitute a cross-link (5-imidazolinone (Ala-Gly)). A 2,3-didehydroalanine (Ser) modification is found at Ser142.

It belongs to the PAL/histidase family. Contains an active site 4-methylidene-imidazol-5-one (MIO), which is formed autocatalytically by cyclization and dehydration of residues Ala-Ser-Gly.

It is found in the cytoplasm. The enzyme catalyses L-histidine = trans-urocanate + NH4(+). The protein operates within amino-acid degradation; L-histidine degradation into L-glutamate; N-formimidoyl-L-glutamate from L-histidine: step 1/3. This chain is Histidine ammonia-lyase, found in Paraburkholderia phytofirmans (strain DSM 17436 / LMG 22146 / PsJN) (Burkholderia phytofirmans).